The following is a 348-amino-acid chain: N-formyl peptide receptor 2 (348 aa).

The N-linked (GlcNAc...) asparagine glycan is linked to Asn-1. Residues 1-24 are Extracellular-facing; the sequence is NFSTPLSEYEEVSYESAGYTVLQI. The chain crosses the membrane as a helical span at residues 25-47; it reads LPLVVLGVTFVLGVLGNGLVIWV. Topologically, residues 48-58 are cytoplasmic; that stretch reads AGFRMTRTVTT. The helical transmembrane segment at 59–80 threads the bilayer; that stretch reads ICYLNLALADFSFTATLPFLIV. At 81–97 the chain is on the extracellular side; that stretch reads SMAMGEKWPFGWFLCKL. The cysteines at positions 95 and 173 are disulfide-linked. The helical transmembrane segment at 98-118 threads the bilayer; that stretch reads IHIVVDINLFGSVFLIGFIAL. The Cytoplasmic segment spans residues 119–137; that stretch reads DRCICVLHPVWAQNHRTVS. Residues 138–159 form a helical membrane-spanning segment; that stretch reads LAMKVIVGPWILALVLTLPVFL. At 160-202 the chain is on the extracellular side; that stretch reads FLTTVTIPNGDTYCTFNFASWGGTPEKRLKVAITMLTARGIIR. A helical membrane pass occupies residues 203–223; that stretch reads FVIGFSMPMSIVATCYGLIAA. Over 224–239 the chain is Cytoplasmic; that stretch reads KIHKKGMIKSSRPLRV. The helical transmembrane segment at 240–263 threads the bilayer; that stretch reads LTAVVASFFICWFPFQLVALLSTV. Topologically, residues 264-283 are extracellular; sequence WLKEILVDGKYKIINILVNP. The helical transmembrane segment at 284 to 303 threads the bilayer; that stretch reads TSSLAFFNSCLNPMLYVFVG. Residues 304-348 are Cytoplasmic-facing; the sequence is QDFRERLIHSLPTSLERALSEDSAPTNDTAASCASPPAETELQAM. Residues 322–348 form a disordered region; sequence LSEDSAPTNDTAASCASPPAETELQAM. Polar residues predominate over residues 326-335; the sequence is SAPTNDTAAS.

Belongs to the G-protein coupled receptor 1 family. Interacts with APP; the interaction takes place at the cell surface and the complex is then rapidly internalized.

It localises to the cell membrane. Its function is as follows. Low affinity receptor for N-formyl-methionyl peptides, which are powerful neutrophil chemotactic factors. Binding of FMLP to the receptor causes activation of neutrophils. This response is mediated via a G-protein that activates a phosphatidylinositol-calcium second messenger system. Receptor for the chemokine-like protein FAM19A5, mediating FAM19A5-stimulated macrophage chemotaxis and the inhibitory effect on TNFSF11/RANKL-induced osteoclast differentiation. This is N-formyl peptide receptor 2 (FPR2) from Macaca mulatta (Rhesus macaque).